A 796-amino-acid chain; its full sequence is Protein SEY1 homolog (796 aa).

At 1 to 701 (MESSNDFSNK…AGTSISSWRN (701 aa)) the chain is on the cytoplasmic side. The region spanning 46 to 280 (GFRFNVVTIL…VPSDGFFVYS (235 aa)) is the GB1/RHD3-type G domain. 56 to 63 (GSQSSGKS) provides a ligand contact to GTP. Residues 554-626 (SLVLLLKAAR…DALTLLKVLK (73 aa)) adopt a coiled-coil conformation. A helical transmembrane segment spans residues 702 to 722 (IPPIFWLVLLVLGWNELRSVF). The Lumenal portion of the chain corresponds to 723 to 725 (KVL). The helical transmembrane segment at 726 to 746 (LRFYVVIPLLIVFYFTFSYSA) threads the bilayer. The Cytoplasmic portion of the chain corresponds to 747-796 (TKLLGPKADQYVKPVRDKVLSLFTALLAWFVRTLHMIASKSSSFKQRPAT).

It belongs to the TRAFAC class dynamin-like GTPase superfamily. GB1/RHD3 GTPase family. RHD3 subfamily.

The protein resides in the endoplasmic reticulum membrane. In terms of biological role, probable GTP-binding protein that may be involved in cell development. The polypeptide is Protein SEY1 homolog (Theileria parva (East coast fever infection agent)).